A 496-amino-acid chain; its full sequence is Cytochrome c-552 (496 aa).

An N-terminal signal peptide occupies residues M1–A23. H100 lines the heme c pocket. Heme contacts are provided by C128, C131, and K132. Residues C166, C169, H170, C210, C213, and H214 each contribute to the heme c site. Residues E216, Y217, K269, and Q271 each contribute to the Ca(2+) site. Position 217 (Y217) interacts with substrate. Substrate is bound at residue H272. Heme c is bound by residues H283, C290, C293, H294, H308, C321, C324, H325, and H400.

Belongs to the cytochrome c-552 family. It depends on Ca(2+) as a cofactor. The cofactor is heme c.

The protein localises to the periplasm. It carries out the reaction 6 Fe(III)-[cytochrome c] + NH4(+) + 2 H2O = 6 Fe(II)-[cytochrome c] + nitrite + 8 H(+). It participates in nitrogen metabolism; nitrate reduction (assimilation). In terms of biological role, catalyzes the reduction of nitrite to ammonia, consuming six electrons in the process. This Aliarcobacter butzleri (strain RM4018) (Arcobacter butzleri) protein is Cytochrome c-552.